The following is a 657-amino-acid chain: Putative GreA-associated domains protein (657 aa).

The GRAD2 domain maps to M1 to T152. The region spanning E153–E657 is the GRAD1 domain.

In Treponema pallidum (strain Nichols), this protein is Putative GreA-associated domains protein.